The primary structure comprises 529 residues: Bifunctional purine biosynthesis protein PurH (529 aa).

Positions 1–148 (MQQRRPVRRA…KNHKDVAIVV (148 aa)) constitute an MGS-like domain.

The protein belongs to the PurH family.

It catalyses the reaction (6R)-10-formyltetrahydrofolate + 5-amino-1-(5-phospho-beta-D-ribosyl)imidazole-4-carboxamide = 5-formamido-1-(5-phospho-D-ribosyl)imidazole-4-carboxamide + (6S)-5,6,7,8-tetrahydrofolate. The catalysed reaction is IMP + H2O = 5-formamido-1-(5-phospho-D-ribosyl)imidazole-4-carboxamide. The protein operates within purine metabolism; IMP biosynthesis via de novo pathway; 5-formamido-1-(5-phospho-D-ribosyl)imidazole-4-carboxamide from 5-amino-1-(5-phospho-D-ribosyl)imidazole-4-carboxamide (10-formyl THF route): step 1/1. Its pathway is purine metabolism; IMP biosynthesis via de novo pathway; IMP from 5-formamido-1-(5-phospho-D-ribosyl)imidazole-4-carboxamide: step 1/1. The polypeptide is Bifunctional purine biosynthesis protein PurH (Salmonella schwarzengrund (strain CVM19633)).